A 271-amino-acid polypeptide reads, in one-letter code: Ferric vulnibactin reductase VuuB (271 aa).

Residues V8–I131 enclose the FAD-binding FR-type domain.

This sequence belongs to the SIP oxidoreductase family. In terms of assembly, monomer. The cofactor is FAD.

The protein resides in the cytoplasm. It catalyses the reaction 2 a Fe(II)-siderophore + NAD(+) + H(+) = 2 a Fe(III)-siderophore + NADH. Its function is as follows. Ferric-siderophore reductase involved in iron removal from the siderophores after their transport into the cell. Acts as a major ferric-vulnibactin reductase catalyzing the reduction of Fe(3+)-vulnibactin, a catecholate siderophore synthesized by V.vulnificus. Catalyzes reduction of Fe(3+)-aerobactin, a citrate-hydroxamate siderophore produced by other bacteria, in the absence of IutB. Catalyzes reduction of Fe(3+)-vibriobactin in vitro. No activity with ferrioxamine B or Fe(3+)-enterobactin. Catalyzes reduction of ferric chelating compounds Fe(3+)-nitrilotriacetic acid (NTA), Fe(3+)-citrate and Fe(3+)-EDTA as well as non-complexed FeCl3 in the presence of NADH as its electron donor and FAD as its cofactor in vitro. Highest activity with Fe(3+)-NTA as electron acceptor. In Vibrio vulnificus, this protein is Ferric vulnibactin reductase VuuB.